Here is a 357-residue protein sequence, read N- to C-terminus: Peptide chain release factor 1 (357 aa).

The residue at position 236 (Gln-236) is an N5-methylglutamine. The segment covering 284 to 293 has biased composition (basic and acidic residues); the sequence is RRKKDQERAN. Residues 284 to 313 form a disordered region; that stretch reads RRKKDQERANNRRKQIGSGDRSERIRTYNF.

It belongs to the prokaryotic/mitochondrial release factor family. In terms of processing, methylated by PrmC. Methylation increases the termination efficiency of RF1.

It is found in the cytoplasm. Functionally, peptide chain release factor 1 directs the termination of translation in response to the peptide chain termination codons UAG and UAA. The chain is Peptide chain release factor 1 from Rickettsia bellii (strain RML369-C).